The following is a 98-amino-acid chain: NADH-ubiquinone oxidoreductase chain 4L (98 aa).

3 helical membrane-spanning segments follow: residues 1–21, 29–49, and 61–81; these read MPSI…GMLI, SLLC…LTAL, and IVLL…LVMV.

The protein belongs to the complex I subunit 4L family. As to quaternary structure, core subunit of respiratory chain NADH dehydrogenase (Complex I) which is composed of 45 different subunits.

Its subcellular location is the mitochondrion inner membrane. The catalysed reaction is a ubiquinone + NADH + 5 H(+)(in) = a ubiquinol + NAD(+) + 4 H(+)(out). Core subunit of the mitochondrial membrane respiratory chain NADH dehydrogenase (Complex I) which catalyzes electron transfer from NADH through the respiratory chain, using ubiquinone as an electron acceptor. Part of the enzyme membrane arm which is embedded in the lipid bilayer and involved in proton translocation. This Lepus europaeus (European hare) protein is NADH-ubiquinone oxidoreductase chain 4L (MT-ND4L).